We begin with the raw amino-acid sequence, 364 residues long: 4-hydroxythreonine-4-phosphate dehydrogenase (364 aa).

Substrate contacts are provided by His-138 and Thr-139. 3 residues coordinate a divalent metal cation: His-169, His-214, and His-269. 3 residues coordinate substrate: Lys-277, Asn-286, and Arg-295.

It belongs to the PdxA family. In terms of assembly, homodimer. Requires a divalent metal cation as cofactor.

It localises to the cytoplasm. It catalyses the reaction 4-(phosphooxy)-L-threonine + NAD(+) = 3-amino-2-oxopropyl phosphate + CO2 + NADH. It participates in cofactor biosynthesis; pyridoxine 5'-phosphate biosynthesis; pyridoxine 5'-phosphate from D-erythrose 4-phosphate: step 4/5. In terms of biological role, catalyzes the NAD(P)-dependent oxidation of 4-(phosphooxy)-L-threonine (HTP) into 2-amino-3-oxo-4-(phosphooxy)butyric acid which spontaneously decarboxylates to form 3-amino-2-oxopropyl phosphate (AHAP). The sequence is that of 4-hydroxythreonine-4-phosphate dehydrogenase from Bacteroides thetaiotaomicron (strain ATCC 29148 / DSM 2079 / JCM 5827 / CCUG 10774 / NCTC 10582 / VPI-5482 / E50).